The following is a 465-amino-acid chain: tRNA (guanine(37)-N(1))-methyltransferase (465 aa).

Residues histidine 189, 227-228 (DL), and 255-256 (DA) contribute to the S-adenosyl-L-methionine site. Residues 283-362 (YPKEGVPANE…GPGPPPSKPW (80 aa)) form a disordered region. Over residues 291 to 320 (NENSSSNGNHNDVREGSQNGANESSVASTT) the composition is skewed to polar residues. The segment covering 343–352 (TKRRNNKRVR) has biased composition (basic residues). Asparagine 371 is a binding site for S-adenosyl-L-methionine.

Belongs to the class I-like SAM-binding methyltransferase superfamily. TRM5/TYW2 family. Monomer.

It localises to the mitochondrion matrix. The protein localises to the nucleus. Its subcellular location is the cytoplasm. The catalysed reaction is guanosine(37) in tRNA + S-adenosyl-L-methionine = N(1)-methylguanosine(37) in tRNA + S-adenosyl-L-homocysteine + H(+). Its function is as follows. Specifically methylates the N1 position of guanosine-37 in various cytoplasmic and mitochondrial tRNAs. Methylation is not dependent on the nature of the nucleoside 5' of the target nucleoside. This is the first step in the biosynthesis of wybutosine (yW), a modified base adjacent to the anticodon of tRNAs and required for accurate decoding. In Sorghum bicolor (Sorghum), this protein is tRNA (guanine(37)-N(1))-methyltransferase.